We begin with the raw amino-acid sequence, 164 residues long: Large ribosomal subunit protein bL9 (164 aa).

The protein belongs to the bacterial ribosomal protein bL9 family.

Its function is as follows. Binds to the 23S rRNA. This is Large ribosomal subunit protein bL9 from Borrelia hermsii (strain HS1 / DAH).